The chain runs to 547 residues: Chaperonin GroEL (547 aa).

Residues 30–33 (TLGP), Lys-51, 87–91 (DGTTT), Gly-415, 479–481 (NAA), and Asp-495 each bind ATP.

It belongs to the chaperonin (HSP60) family. Forms a cylinder of 14 subunits composed of two heptameric rings stacked back-to-back. Interacts with the co-chaperonin GroES.

The protein localises to the cytoplasm. The catalysed reaction is ATP + H2O + a folded polypeptide = ADP + phosphate + an unfolded polypeptide.. Functionally, together with its co-chaperonin GroES, plays an essential role in assisting protein folding. The GroEL-GroES system forms a nano-cage that allows encapsulation of the non-native substrate proteins and provides a physical environment optimized to promote and accelerate protein folding. The chain is Chaperonin GroEL from Bordetella pertussis (strain Tohama I / ATCC BAA-589 / NCTC 13251).